A 113-amino-acid polypeptide reads, in one-letter code: Histone H2B (113 aa).

Positions 1-21 (MPATPAKRAKRVQQEKRHHKK) are disordered. Basic residues predominate over residues 7–21 (KRAKRVQQEKRHHKK). Residue lysine 109 forms a Glycyl lysine isopeptide (Lys-Gly) (interchain with G-Cter in ubiquitin) linkage.

This sequence belongs to the histone H2B family. The nucleosome is a histone octamer containing two molecules each of H2A, H2B, H3 and H4 assembled in one H3-H4 heterotetramer and two H2A-H2B heterodimers. The octamer wraps approximately 147 bp of DNA. In terms of processing, monoubiquitination of Lys-109 gives a specific tag for epigenetic transcriptional activation and is also prerequisite for histone H3 'Lys-4' and 'Lys-79' methylation.

The protein localises to the nucleus. It localises to the chromosome. In terms of biological role, core component of nucleosome. Nucleosomes wrap and compact DNA into chromatin, limiting DNA accessibility to the cellular machineries which require DNA as a template. Histones thereby play a central role in transcription regulation, DNA repair, DNA replication and chromosomal stability. DNA accessibility is regulated via a complex set of post-translational modifications of histones, also called histone code, and nucleosome remodeling. This is Histone H2B (H2B1) from Euplotes crassus.